We begin with the raw amino-acid sequence, 380 residues long: Cytochrome b (380 aa).

A run of 4 helical transmembrane segments spans residues 33–53 (FGSLLGLCLISQILTGLFLAM), 77–98 (WLIRNLHANGASFFFICIYLHI), 113–133 (WNIGVVLLLLVMATAFVGYVL), and 178–198 (FFAFHFLLPFIVAAMTMLHLL). 2 residues coordinate heme b: His83 and His97. Heme b contacts are provided by His182 and His196. His201 is a binding site for a ubiquinone. Helical transmembrane passes span 226–246 (YKDLLGFAAVIILLTCLALFT), 288–308 (LGGVLALLASILVLMVVPILH), 320–340 (VTQFLFWALIANVAILTWIGG), and 347–367 (YIIIGQIASLTYFALFLLIMP).

This sequence belongs to the cytochrome b family. The cytochrome bc1 complex contains 3 respiratory subunits (MT-CYB, CYC1 and UQCRFS1), 2 core proteins (UQCRC1 and UQCRC2) and probably 6 low-molecular weight proteins. The cofactor is heme b.

It is found in the mitochondrion inner membrane. Functionally, component of the ubiquinol-cytochrome c reductase complex (complex III or cytochrome b-c1 complex) that is part of the mitochondrial respiratory chain. The b-c1 complex mediates electron transfer from ubiquinol to cytochrome c. Contributes to the generation of a proton gradient across the mitochondrial membrane that is then used for ATP synthesis. In Pagrus major (Red sea bream), this protein is Cytochrome b (mt-cyb).